Consider the following 242-residue polypeptide: Intraflagellar transport-associated protein (242 aa).

Phosphoserine is present on S57.

Interacts with IFT122; the interaction associates IFTAP with IFT-A complex.

Seems to play a role in ciliary BBSome localization, maybe through interaction with IFT-A complex. This is Intraflagellar transport-associated protein (IFTAP) from Bos taurus (Bovine).